The following is a 492-amino-acid chain: Cytochrome P450 2B19 (492 aa).

Ser-129 carries the phosphoserine; by PKA modification. Position 437 (Cys-437) interacts with heme.

This sequence belongs to the cytochrome P450 family. Requires heme as cofactor. As to expression, expressed only in differentiated keratinocytes in skin.

Its subcellular location is the endoplasmic reticulum membrane. It is found in the microsome membrane. It catalyses the reaction an organic molecule + reduced [NADPH--hemoprotein reductase] + O2 = an alcohol + oxidized [NADPH--hemoprotein reductase] + H2O + H(+). In terms of biological role, cytochromes P450 are a group of heme-thiolate monooxygenases. In liver microsomes, this enzyme is involved in an NADPH-dependent electron transport pathway. It oxidizes a variety of structurally unrelated compounds, including steroids, fatty acids, and xenobiotics. In Mus musculus (Mouse), this protein is Cytochrome P450 2B19 (Cyp2b19).